Consider the following 1217-residue polypeptide: ATP-dependent helicase/nuclease subunit A (1217 aa).

Residues valine 10–arginine 475 form the UvrD-like helicase ATP-binding domain. An ATP-binding site is contributed by alanine 31–threonine 38. The region spanning lysine 476–glycine 786 is the UvrD-like helicase C-terminal domain.

It belongs to the helicase family. AddA subfamily. As to quaternary structure, heterodimer of AddA and AddB/RexB. It depends on Mg(2+) as a cofactor.

The enzyme catalyses Couples ATP hydrolysis with the unwinding of duplex DNA by translocating in the 3'-5' direction.. It catalyses the reaction ATP + H2O = ADP + phosphate + H(+). The heterodimer acts as both an ATP-dependent DNA helicase and an ATP-dependent, dual-direction single-stranded exonuclease. Recognizes the chi site generating a DNA molecule suitable for the initiation of homologous recombination. The AddA nuclease domain is required for chi fragment generation; this subunit has the helicase and 3' -&gt; 5' nuclease activities. In Staphylococcus aureus (strain MSSA476), this protein is ATP-dependent helicase/nuclease subunit A.